A 619-amino-acid polypeptide reads, in one-letter code: Xyloglucan galactosyltransferase MUR3 (619 aa).

The tract at residues 1 to 26 is disordered; the sequence is MFPRVSMRRRSAEVSPTEPMEKGNGK. The Cytoplasmic portion of the chain corresponds to 1–33; it reads MFPRVSMRRRSAEVSPTEPMEKGNGKNQTNRIC. The helical; Signal-anchor for type II membrane protein transmembrane segment at 34–54 threads the bilayer; sequence LLVALSLFFWALLLYFHFVVL. The Lumenal segment spans residues 55–619; that stretch reads GTSNIDKQLQ…WKSEQRDKTQ (565 aa). N-linked (GlcNAc...) asparagine glycans are attached at residues Asn-116, Asn-146, Asn-231, Asn-257, Asn-319, Asn-465, and Asn-482. The segment at 576–619 is disordered; it reads HVWDPFFSKPKPGEDGSSDGNGGTTISADAAKNSWKSEQRDKTQ. Over residues 610-619 the composition is skewed to basic and acidic residues; sequence WKSEQRDKTQ.

Belongs to the glycosyltransferase 47 family. As to quaternary structure, interacts with CSLC4 and FUT1. As to expression, ubiquitous.

It localises to the golgi apparatus. It is found in the golgi stack membrane. The protein localises to the golgi apparatus membrane. In terms of biological role, involved in the attachment of the Gal residue on the third xylosyl unit within the XXXG core structure of xyloglucan, the principal glycan that interlaces the cellulose microfibrils in plant cell wall. Associates with other xyloglucan-synthesizing enzymes to form multiprotein complexes for xyloglucan synthesis in the Golgi. Interacts with actin and is required for the proper endomembrane organization and for the cell elongation. Not involved in the trafficking from the endoplasmic reticulum to the vacuoles. Involved in salt stress tolerance. Participates in the control of the expression of genes encoding for proteins involved in reactive oxygen species (ROS) detoxification under salt stress. May contribute to the maintenance of the proper organization of actin microfilaments during salt stress-induced ROS production. The chain is Xyloglucan galactosyltransferase MUR3 from Arabidopsis thaliana (Mouse-ear cress).